Consider the following 189-residue polypeptide: UPF0688 protein C1orf174 homolog (189 aa).

The disordered stretch occupies residues 53-137 (QMAGDGGEAK…TTDPSVFFDE (85 aa)). Composition is skewed to basic and acidic residues over residues 59–73 (GEAKRLPKRPFHGEV) and 93–103 (APGERRGKENS).

This sequence belongs to the UPF0688 family.

The protein resides in the nucleus. In Danio rerio (Zebrafish), this protein is UPF0688 protein C1orf174 homolog.